Reading from the N-terminus, the 39-residue chain is MHLRSRWWLALLYCKDPVSRSATTPKVETRASCLLSRAF.

A signal peptide spans 1 to 21 (MHLRSRWWLALLYCKDPVSRS).

This is an uncharacterized protein from Saccharomyces cerevisiae (strain ATCC 204508 / S288c) (Baker's yeast).